We begin with the raw amino-acid sequence, 94 residues long: Small ribosomal subunit protein bS6 (94 aa).

This sequence belongs to the bacterial ribosomal protein bS6 family.

Its function is as follows. Binds together with bS18 to 16S ribosomal RNA. The chain is Small ribosomal subunit protein bS6 from Alkaliphilus metalliredigens (strain QYMF).